We begin with the raw amino-acid sequence, 483 residues long: S-adenosylhomocysteine hydrolase-like protein 1 (483 aa).

The segment at 1–56 (MQEFTKFPTKTGRRSLSRSISQSSTDSYSSAASYTDSSDDEVSPREKQQTNSKGSS) is disordered. A compositionally biased stretch (low complexity) spans 17-36 (SRSISQSSTDSYSSAASYTD). The tract at residues 18 to 45 (RSISQSSTDSYSSAASYTDSSDDEVSPR) is PEST. S21 is modified (phosphoserine; by PKD). S24, S27, S30, and S37 each carry phosphoserine. The interval 91 to 154 (QGEKPLAGAK…EAGVAVFAWK (64 aa)) is interaction with BCL2L10. The substrate site is built by T108, D182, E207, K237, and D241. The interval 234 to 401 (SVTKQKFDNL…EGRLLNLSCS (168 aa)) is NAD binding. NAD(+) contacts are provided by residues 271-275 (GYGEV), E294, and N329. A Phosphoserine modification is found at S344. 350 to 352 (MGH) provides a ligand contact to NAD(+). Residues 473-483 (NGPFKPNYYRY) form a PDZ-binding region.

This sequence belongs to the adenosylhomocysteinase family. Forms multimers. Forms heteromultimers with AHCYL2 (via the C-terminal region). Interacts (when phosphorylated) with ITPR1 (when not phosphorylated); the interaction suppresses inositol 1,4,5-trisphosphate binding to ITPR1. Interacts with BCL2L10; this strengthens the interaction of AHCYL1 with ITPR1. Interacts with CFTR and SLC26A6; the interactions take place once AHCYL1 is released from ITPR1 and increase CFTR and SLC26A6 activities. Interacts with RRM1; in a phosphorylation- and (dATP)-dependent manner. Interacts (via PEST domain when phosphorylated) with SLC4A4 isoform 1 but not isoform 2; the interaction increases SLC4A4 isoform 1 activity. Interacts (when phosphorylated) with SLC9A3; the interaction is required for SLC9A3 apical location and activity. Interacts (when phosphorylated) with FIP1L1; the interaction is direct and associates AHCYL1 with the CPSF complex and RNA. Interacts with PAPOLA. Interacts with ZCCHC4. Interacts with AHCY. The cofactor is NAD(+). Post-translationally, phosphorylated at Ser/Thr residues between Ser-21 and Thr-25 in the PEST region: required for interaction with dATP-bound RRM1 and ITPR1. Phosphorylation at Ser-21 by PRKD1 and CAMK4 is required for further phosphorylations by CSNK1A1. Phosphorylation is induced by oxidative stress. Probably phosphorylated by CAMK2A; phosphorylation at Ser-21 may be required for interaction with SLC9A3. Dephosphorylated in response to apoptotic stress conditions which causes translocation of both AHCYL1 and BCL2L10 from mitochondria-associated endoplasmic reticulum membranes and promotes apoptosis. Expressed in kidney proximal tubules and outer medulla (at protein level).

The protein localises to the endoplasmic reticulum. The protein resides in the cytoplasm. It localises to the cytosol. It is found in the apical cell membrane. Its subcellular location is the microsome. Its function is as follows. Multifaceted cellular regulator which coordinates several essential cellular functions including regulation of epithelial HCO3(-) and fluid secretion, mRNA processing and DNA replication. Regulates ITPR1 sensitivity to inositol 1,4,5-trisphosphate, competing for the common binding site and acting as endogenous 'pseudoligand' whose inhibitory activity can be modulated by its phosphorylation status. Promotes the formation of contact points between the endoplasmic reticulum (ER) and mitochondria, facilitating transfer of Ca(2+) from the ER to mitochondria. Under normal cellular conditions, functions cooperatively with BCL2L10 to limit ITPR1-mediated Ca(2+) release but, under apoptotic stress conditions, dephosphorylated which promotes dissociation of both AHCYL1 and BCL2L10 from mitochondria-associated endoplasmic reticulum membranes, inhibits BCL2L10 interaction with ITPR1 and leads to increased Ca(2+) transfer to mitochondria which promotes apoptosis. In the pancreatic and salivary ducts, at resting state, attenuates inositol 1,4,5-trisphosphate-induced calcium release by interacting with ITPR1. When extracellular stimuli induce ITPR1 phosphorylation or inositol 1,4,5-trisphosphate production, dissociates from ITPR1 to interact with CFTR and SLC26A6, mediating their synergistic activation by calcium and cAMP that stimulates the epithelial secretion of electrolytes and fluid. Also activates basolateral SLC4A4 isoform 1 to coordinate fluid and HCO3(-) secretion. Inhibits the effect of STK39 on SLC4A4 and CFTR by recruiting PP1 phosphatase which activates SLC4A4, SLC26A6 and CFTR through dephosphorylation. Mediates the induction of SLC9A3 surface expression produced by Angiotensin-2. Depending on the cell type, activates SLC9A3 in response to calcium or reverses SLC9A3R2-dependent calcium inhibition. May modulate the polyadenylation state of specific mRNAs, both by controlling the subcellular location of FIP1L1 and by inhibiting PAPOLA activity, in response to a stimulus that alters its phosphorylation state. Acts as a (dATP)-dependent inhibitor of ribonucleotide reductase large subunit RRM1, controlling the endogenous dNTP pool and ensuring normal cell cycle progression. In vitro does not exhibit any S-adenosyl-L-homocysteine hydrolase activity. In Rattus norvegicus (Rat), this protein is S-adenosylhomocysteine hydrolase-like protein 1.